Consider the following 800-residue polypeptide: Phenylalanine--tRNA ligase beta subunit (800 aa).

One can recognise a tRNA-binding domain in the interval 39–154 (TKDIKNLVVG…ESQVPGTDAL (116 aa)). Residues 408–483 (AFITPIDITA…RIYGYDDIPS (76 aa)) enclose the B5 domain. Residues D461, D467, E470, and E471 each contribute to the Mg(2+) site. Residues 708-800 (PRFPGMSRDI…ALIEQGAVIR (93 aa)) enclose the FDX-ACB domain.

Belongs to the phenylalanyl-tRNA synthetase beta subunit family. Type 1 subfamily. In terms of assembly, tetramer of two alpha and two beta subunits. The cofactor is Mg(2+).

It localises to the cytoplasm. The catalysed reaction is tRNA(Phe) + L-phenylalanine + ATP = L-phenylalanyl-tRNA(Phe) + AMP + diphosphate + H(+). In Staphylococcus aureus (strain MSSA476), this protein is Phenylalanine--tRNA ligase beta subunit.